A 391-amino-acid polypeptide reads, in one-letter code: NADH-quinone oxidoreductase subunit D (391 aa).

This sequence belongs to the complex I 49 kDa subunit family. NDH-1 is composed of 14 different subunits. Subunits NuoB, C, D, E, F, and G constitute the peripheral sector of the complex.

It is found in the cell inner membrane. It catalyses the reaction a quinone + NADH + 5 H(+)(in) = a quinol + NAD(+) + 4 H(+)(out). Its function is as follows. NDH-1 shuttles electrons from NADH, via FMN and iron-sulfur (Fe-S) centers, to quinones in the respiratory chain. The immediate electron acceptor for the enzyme in this species is believed to be ubiquinone. Couples the redox reaction to proton translocation (for every two electrons transferred, four hydrogen ions are translocated across the cytoplasmic membrane), and thus conserves the redox energy in a proton gradient. The polypeptide is NADH-quinone oxidoreductase subunit D (Rickettsia felis (strain ATCC VR-1525 / URRWXCal2) (Rickettsia azadi)).